Reading from the N-terminus, the 190-residue chain is dITP/XTP pyrophosphatase (190 aa).

7 to 12 contacts substrate; the sequence is THNPNK. Positions 39 and 68 each coordinate Mg(2+). Aspartate 68 functions as the Proton acceptor in the catalytic mechanism. Substrate is bound by residues threonine 69, 148–151, lysine 171, and 176–177; these read FGYD and HR.

Belongs to the HAM1 NTPase family. In terms of assembly, homodimer. Mg(2+) serves as cofactor.

It carries out the reaction XTP + H2O = XMP + diphosphate + H(+). The enzyme catalyses dITP + H2O = dIMP + diphosphate + H(+). It catalyses the reaction ITP + H2O = IMP + diphosphate + H(+). Functionally, pyrophosphatase that catalyzes the hydrolysis of nucleoside triphosphates to their monophosphate derivatives, with a high preference for the non-canonical purine nucleotides XTP (xanthosine triphosphate), dITP (deoxyinosine triphosphate) and ITP. Seems to function as a house-cleaning enzyme that removes non-canonical purine nucleotides from the nucleotide pool, thus preventing their incorporation into DNA/RNA and avoiding chromosomal lesions. The sequence is that of dITP/XTP pyrophosphatase from Christiangramia forsetii (strain DSM 17595 / CGMCC 1.15422 / KT0803) (Gramella forsetii).